A 180-amino-acid polypeptide reads, in one-letter code: Putative 3-methyladenine DNA glycosylase (180 aa).

This sequence belongs to the DNA glycosylase MPG family.

This Ehrlichia chaffeensis (strain ATCC CRL-10679 / Arkansas) protein is Putative 3-methyladenine DNA glycosylase.